Here is a 356-residue protein sequence, read N- to C-terminus: 5-formaminoimidazole-4-carboxamide-1-(beta)-D-ribofuranosyl 5'-monophosphate synthetase 1 (356 aa).

The 5-amino-1-(5-phospho-beta-D-ribosyl)imidazole-4-carboxamide site is built by His-27 and Ser-94. One can recognise an ATP-grasp domain in the interval 101–333 (TENFAEMAVP…YADLIQEDLS (233 aa)). Residues 145 to 196 (PRDI…TRYY) and Glu-226 each bind ATP. Position 255 (Asn-255) interacts with 5-amino-1-(5-phospho-beta-D-ribosyl)imidazole-4-carboxamide. Mg(2+) is bound by residues Glu-293 and Glu-306.

This sequence belongs to the phosphohexose mutase family. Mg(2+) is required as a cofactor. Requires Mn(2+) as cofactor.

The enzyme catalyses 5-amino-1-(5-phospho-beta-D-ribosyl)imidazole-4-carboxamide + formate + ATP = 5-formamido-1-(5-phospho-D-ribosyl)imidazole-4-carboxamide + ADP + phosphate. Its pathway is purine metabolism; IMP biosynthesis via de novo pathway; 5-formamido-1-(5-phospho-D-ribosyl)imidazole-4-carboxamide from 5-amino-1-(5-phospho-D-ribosyl)imidazole-4-carboxamide (formate route): step 1/1. Functionally, catalyzes the ATP- and formate-dependent formylation of 5-aminoimidazole-4-carboxamide-1-beta-d-ribofuranosyl 5'-monophosphate (AICAR) to 5-formaminoimidazole-4-carboxamide-1-beta-d-ribofuranosyl 5'-monophosphate (FAICAR) in the absence of folates. In Methanosarcina mazei (strain ATCC BAA-159 / DSM 3647 / Goe1 / Go1 / JCM 11833 / OCM 88) (Methanosarcina frisia), this protein is 5-formaminoimidazole-4-carboxamide-1-(beta)-D-ribofuranosyl 5'-monophosphate synthetase 1.